Reading from the N-terminus, the 504-residue chain is Calcium/calmodulin-dependent protein kinase type II (504 aa).

The region spanning 65-351 (YQLIENLGDG…IHQFFQHPWI (287 aa)) is the Protein kinase domain. ATP-binding positions include 71 to 79 (LGDGAFSQV) and K94. D188 serves as the catalytic Proton acceptor. T252 is modified (phosphothreonine).

The protein belongs to the protein kinase superfamily. CAMK Ser/Thr protein kinase family. CaMK subfamily. In terms of assembly, interacts with sty1. Mg(2+) is required as a cofactor. Post-translationally, autophosphorylated.

The protein resides in the cytoplasm. It localises to the barrier septum. Its subcellular location is the forespore membrane. The protein localises to the ascus epiplasm. The catalysed reaction is L-seryl-[protein] + ATP = O-phospho-L-seryl-[protein] + ADP + H(+). It catalyses the reaction L-threonyl-[protein] + ATP = O-phospho-L-threonyl-[protein] + ADP + H(+). Its function is as follows. Has a role in the regulation of G2/M transition during the mitotic cell cycle. The chain is Calcium/calmodulin-dependent protein kinase type II from Schizosaccharomyces pombe (strain 972 / ATCC 24843) (Fission yeast).